Consider the following 96-residue polypeptide: Small ribosomal subunit protein bS6 (96 aa).

It belongs to the bacterial ribosomal protein bS6 family.

Its function is as follows. Binds together with bS18 to 16S ribosomal RNA. The polypeptide is Small ribosomal subunit protein bS6 (Bacillus cereus (strain ATCC 10987 / NRS 248)).